The sequence spans 224 residues: Ribonuclease 3 (224 aa).

One can recognise an RNase III domain in the interval 4–127; that stretch reads IEKLEQSLTY…IIGAIHLEAG (124 aa). Glutamate 40 is a binding site for Mg(2+). Residue aspartate 44 is part of the active site. The Mg(2+) site is built by aspartate 113 and glutamate 116. Glutamate 116 is a catalytic residue. The region spanning 154 to 223 is the DRBM domain; sequence DYKTKLQEIT…AKIALEKLGA (70 aa).

Belongs to the ribonuclease III family. Homodimer. It depends on Mg(2+) as a cofactor.

The protein localises to the cytoplasm. It carries out the reaction Endonucleolytic cleavage to 5'-phosphomonoester.. Its function is as follows. Digests double-stranded RNA. Involved in the processing of primary rRNA transcript to yield the immediate precursors to the large and small rRNAs (23S and 16S). Processes some mRNAs, and tRNAs when they are encoded in the rRNA operon. Processes pre-crRNA and tracrRNA of type II CRISPR loci if present in the organism. The chain is Ribonuclease 3 from Campylobacter jejuni subsp. jejuni serotype O:6 (strain 81116 / NCTC 11828).